The following is a 165-amino-acid chain: UPF0303 protein BceJ2315_15790 (165 aa).

Belongs to the UPF0303 family.

This chain is UPF0303 protein BceJ2315_15790, found in Burkholderia cenocepacia (strain ATCC BAA-245 / DSM 16553 / LMG 16656 / NCTC 13227 / J2315 / CF5610) (Burkholderia cepacia (strain J2315)).